A 518-amino-acid polypeptide reads, in one-letter code: Lysine--tRNA ligase (518 aa).

The Mg(2+) site is built by E407 and E414.

Belongs to the class-II aminoacyl-tRNA synthetase family. In terms of assembly, homodimer. The cofactor is Mg(2+).

The protein localises to the cytoplasm. The catalysed reaction is tRNA(Lys) + L-lysine + ATP = L-lysyl-tRNA(Lys) + AMP + diphosphate. This chain is Lysine--tRNA ligase, found in Helicobacter hepaticus (strain ATCC 51449 / 3B1).